We begin with the raw amino-acid sequence, 255 residues long: Cathepsin G (255 aa).

The signal sequence occupies residues 1–18 (MQPLLLLLAFLLPTGAEA). Residues 19–20 (GE) constitute a propeptide, activation peptide. Residues 21–25 (IIGGR) are important for antimicrobial activity. The region spanning 21–243 (IIGGRESRPH…FLPWIRTTMR (223 aa)) is the Peptidase S1 domain. Cysteines 49 and 65 form a disulfide. Residue His64 is the Charge relay system of the active site. Asn71 is a glycosylation site (N-linked (GlcNAc...) (complex) asparagine; alternate). Residue Asn71 is glycosylated (N-linked (GlcNAc...) (paucimannose) asparagine; alternate). The interval 97-111 (HPQYNQRTIQNDIML) is important for antimicrobial activity. Asp108 serves as the catalytic Charge relay system. Intrachain disulfides connect Cys142–Cys207 and Cys172–Cys186. The active-site Charge relay system is Ser201. A propeptide spanning residues 245–255 (FKLLDQMETPL) is cleaved from the precursor.

It belongs to the peptidase S1 family. (Microbial infection) Interacts with CASP4; the interaction is promoted by the Td92 surface protein of the periodontal pathogen T.denticola and leads to CASP4 activation. As to quaternary structure, (Microbial infection) Interacts with M.tuberculosis protein Rv3364c. In terms of assembly, (Microbial infection) Interacts with S.aureus EapH1; EapH1 acts as a reversible inhibitor of CATG activity. Two C-terminal truncation variants have been identified, one which ends at Arg-243 and one which ends at Ser-244. As to expression, expressed in neutrophils (at protein level). Expressed in B cells.

The protein localises to the cell membrane. It localises to the cytoplasmic granule. The protein resides in the secreted. It is found in the cytoplasm. Its subcellular location is the cytosol. The protein localises to the lysosome. It localises to the nucleus. It carries out the reaction Specificity similar to chymotrypsin C.. With respect to regulation, inhibited by soybean trypsin inhibitor, benzamidine, the synthetic peptide R13K, Z-Gly-Leu-Phe-CH2Cl, phenylmethylsulfonyl fluoride, 3,4-dichloroisocoumarin, DFP, SBTI and alpha-1-antitrypsin. Inhibited by LPS from P.aeruginosa but not by LPS from S.minnesota. Not inhibited by elastinal, CMK, TLCK, ETDA or leupeptin. Its activity is regulated as follows. (Microbial infection) Inhibited reversibly by S.aureus EapH1. (Microbial infection) Activity is induced by the Td92 surface protein of the periodontal pathogen T.denticola. In terms of biological role, serine protease with trypsin- and chymotrypsin-like specificity. Also displays antibacterial activity against Gram-negative and Gram-positive bacteria independent of its protease activity. Prefers Phe and Tyr residues in the P1 position of substrates but also cleaves efficiently after Trp and Leu. Shows a preference for negatively charged amino acids in the P2' position and for aliphatic amino acids both upstream and downstream of the cleavage site. Required for recruitment and activation of platelets which is mediated by the F2RL3/PAR4 platelet receptor. Binds reversibly to and stimulates B cells and CD4(+) and CD8(+) T cells. Also binds reversibly to natural killer (NK) cells and enhances NK cell cytotoxicity through its protease activity. Cleaves complement C3. Cleaves vimentin. Cleaves thrombin receptor F2R/PAR1 and acts as either an agonist or an inhibitor, depending on the F2R cleavage site. Cleavage of F2R at '41-Arg-|-Ser-42' results in receptor activation while cleavage at '55-Phe-|-Trp-56' results in inhibition of receptor activation. Cleaves the synovial mucin-type protein PRG4/lubricin. Cleaves and activates IL36G which promotes expression of chemokines CXCL1 and CXLC8 in keratinocytes. Cleaves IL33 into mature forms which have greater activity than the unprocessed form. Cleaves coagulation factor F8 to produce a partially activated form. Also cleaves and activates coagulation factor F10. Cleaves leukocyte cell surface protein SPN/CD43 to release its extracellular domain and trigger its intramembrane proteolysis by gamma-secretase, releasing the CD43 cytoplasmic tail chain (CD43-ct) which translocates to the nucleus. Cleaves CCL5/RANTES to produce RANTES(4-68) lacking the N-terminal three amino acids which exhibits reduced chemotactic and antiviral activities. During apoptosis, cleaves SMARCA2/BRM to produce a 160 kDa cleavage product which localizes to the cytosol. Cleaves myelin basic protein MBP in B cell lysosomes at '224-Phe-|-Lys-225' and '248-Phe-|-Ser-249', degrading the major immunogenic MBP epitope and preventing the activation of MBP-specific autoreactive T cells. Cleaves annexin ANXA1 and antimicrobial peptide CAMP to produce peptides which act on neutrophil N-formyl peptide receptors to enhance the release of CXCL2. Acts as a ligand for the N-formyl peptide receptor FPR1, enhancing phagocyte chemotaxis. Has antibacterial activity against the Gram-negative bacteria N.gonorrhoeae and P.aeruginosa. Likely to act against N.gonorrhoeae by interacting with N.gonorrhoeae penA/PBP2. Exhibits potent antimicrobial activity against the Gram-positive bacterium L.monocytogenes. Has antibacterial activity against the Gram-positive bacterium S.aureus and degrades S.aureus biofilms, allowing polymorphonuclear leukocytes to penetrate the biofilm and phagocytose bacteria. Has antibacterial activity against M.tuberculosis. Mediates CASP4 activation induced by the Td92 surface protein of the periodontal pathogen T.denticola, causing production and secretion of IL1A and leading to pyroptosis of gingival fibroblasts. Induces platelet aggregation which is strongly potentiated in the presence of ELANE. In Homo sapiens (Human), this protein is Cathepsin G (CTSG).